A 342-amino-acid polypeptide reads, in one-letter code: Deoxyguanosinetriphosphate triphosphohydrolase-like protein (342 aa).

The 116-residue stretch at 75–190 (RLVHTLEVSQ…VRFADKIAYV (116 aa)) folds into the HD domain.

It belongs to the dGTPase family. Type 2 subfamily.

This is Deoxyguanosinetriphosphate triphosphohydrolase-like protein from Clostridium perfringens (strain 13 / Type A).